The following is a 513-amino-acid chain: ATP synthase subunit alpha (513 aa).

Position 169-176 (169-176 (GDRQTGKT)) interacts with ATP.

This sequence belongs to the ATPase alpha/beta chains family. In terms of assembly, F-type ATPases have 2 components, CF(1) - the catalytic core - and CF(0) - the membrane proton channel. CF(1) has five subunits: alpha(3), beta(3), gamma(1), delta(1), epsilon(1). CF(0) has three main subunits: a(1), b(2) and c(9-12). The alpha and beta chains form an alternating ring which encloses part of the gamma chain. CF(1) is attached to CF(0) by a central stalk formed by the gamma and epsilon chains, while a peripheral stalk is formed by the delta and b chains.

The protein resides in the cell inner membrane. It catalyses the reaction ATP + H2O + 4 H(+)(in) = ADP + phosphate + 5 H(+)(out). Functionally, produces ATP from ADP in the presence of a proton gradient across the membrane. The alpha chain is a regulatory subunit. The sequence is that of ATP synthase subunit alpha from Bordetella petrii (strain ATCC BAA-461 / DSM 12804 / CCUG 43448).